The primary structure comprises 182 residues: Adenylate kinase (182 aa).

12-17 (GAGKGT) is an ATP binding site. The tract at residues 32–61 (STGELLRKEIEMNTALGIQVKDIMNRGELV) is NMP. AMP is bound by residues Thr-33, Arg-38, 59–61 (ELV), 85–88 (GYPR), and Gln-92. The LID stretch occupies residues 126-132 (LRGRKDD). Residue Arg-127 participates in ATP binding. AMP contacts are provided by Arg-129 and Arg-140. An ATP-binding site is contributed by Arg-168.

The protein belongs to the adenylate kinase family. As to quaternary structure, monomer.

The protein localises to the cytoplasm. The enzyme catalyses AMP + ATP = 2 ADP. The protein operates within purine metabolism; AMP biosynthesis via salvage pathway; AMP from ADP: step 1/1. Functionally, catalyzes the reversible transfer of the terminal phosphate group between ATP and AMP. Plays an important role in cellular energy homeostasis and in adenine nucleotide metabolism. The sequence is that of Adenylate kinase from Prochlorococcus marinus (strain MIT 9301).